Consider the following 353-residue polypeptide: Phosphate acyltransferase (353 aa).

The protein belongs to the PlsX family. In terms of assembly, homodimer. Probably interacts with PlsY.

It localises to the cytoplasm. It carries out the reaction a fatty acyl-[ACP] + phosphate = an acyl phosphate + holo-[ACP]. It functions in the pathway lipid metabolism; phospholipid metabolism. Its function is as follows. Catalyzes the reversible formation of acyl-phosphate (acyl-PO(4)) from acyl-[acyl-carrier-protein] (acyl-ACP). This enzyme utilizes acyl-ACP as fatty acyl donor, but not acyl-CoA. The chain is Phosphate acyltransferase from Agrobacterium fabrum (strain C58 / ATCC 33970) (Agrobacterium tumefaciens (strain C58)).